The following is a 91-amino-acid chain: Small ribosomal subunit protein uS15 (91 aa).

It belongs to the universal ribosomal protein uS15 family. As to quaternary structure, part of the 30S ribosomal subunit. Forms a bridge to the 50S subunit in the 70S ribosome, contacting the 23S rRNA.

Its function is as follows. One of the primary rRNA binding proteins, it binds directly to 16S rRNA where it helps nucleate assembly of the platform of the 30S subunit by binding and bridging several RNA helices of the 16S rRNA. Functionally, forms an intersubunit bridge (bridge B4) with the 23S rRNA of the 50S subunit in the ribosome. The protein is Small ribosomal subunit protein uS15 of Legionella pneumophila (strain Paris).